The primary structure comprises 226 residues: RLA class II histocompatibility antigen, DP alpha-1 chain (226 aa).

Over 1 to 189 the chain is Extracellular; sequence EHVSVFVIFA…PIQMPETTET (189 aa). Asparagine 75 and asparagine 115 each carry an N-linked (GlcNAc...) asparagine glycan. The 93-residue stretch at 84-176 folds into the Ig-like C1-type domain; it reads PEVIVFPKEP…LDAPLLTHWE (93 aa). Residues cysteine 104 and cysteine 160 are joined by a disulfide bond. Residues 190 to 210 form a helical membrane-spanning segment; the sequence is VVCALGLVVGLAGVVVGIVLI. Over 211–226 the chain is Cytoplasmic; that stretch reads TKALRSSPDPRARRPL.

It belongs to the MHC class II family.

Its subcellular location is the membrane. The chain is RLA class II histocompatibility antigen, DP alpha-1 chain from Oryctolagus cuniculus (Rabbit).